Consider the following 489-residue polypeptide: Homoserine O-acetyltransferase (489 aa).

An AB hydrolase-1 domain is found at 47–354 (NAILVCHALT…NYGHDSFLLE (308 aa)). The Nucleophile role is filled by Ser152. Position 221 (Arg221) interacts with substrate. Catalysis depends on residues Asp315 and His348. Residue Asp349 coordinates substrate. CBS domains lie at 375-434 (MIED…NLEE) and 436-489 (MTKN…IEEF).

It belongs to the AB hydrolase superfamily. MetX family. Homodimer.

The protein localises to the cytoplasm. The catalysed reaction is L-homoserine + acetyl-CoA = O-acetyl-L-homoserine + CoA. The protein operates within amino-acid biosynthesis; L-methionine biosynthesis via de novo pathway; O-acetyl-L-homoserine from L-homoserine: step 1/1. Transfers an acetyl group from acetyl-CoA to L-homoserine, forming acetyl-L-homoserine. This chain is Homoserine O-acetyltransferase, found in Methanohalobium evestigatum (strain ATCC BAA-1072 / DSM 3721 / NBRC 107634 / OCM 161 / Z-7303).